The primary structure comprises 519 residues: Dolichol kinase (519 aa).

Topologically, residues 1-47 are cytoplasmic; that stretch reads MVAIIPHASFTTIKLTQKTEGSQMPTEEICKINMRTRKFDVGGNSRD. The helical transmembrane segment at 48–68 threads the bilayer; it reads FECFYSNFVQTVILLGTFFYC. Residues 69 to 88 lie on the Lumenal side of the membrane; the sequence is VERLQPWSIVTADISYKQIF. A helical membrane pass occupies residues 89–109; it reads VNVFVVCLIMVGLIFTKYWQH. Residues 110-118 are Cytoplasmic-facing; that stretch reads GYKSLPKFD. Residues 119–139 form a helical membrane-spanning segment; the sequence is TIYSLYLPFMVSLLFDTSSTV. The Lumenal segment spans residues 140-151; the sequence is INTILILSVLNS. Residues 152–172 traverse the membrane as a helical segment; sequence YRWRTQLVVIILQLCLIFFNF. Topologically, residues 173–181 are cytoplasmic; sequence EAGDRLKNI. A helical membrane pass occupies residues 182–203; the sequence is ISIVINSLLSLILKYIGQLKSL. At 204-223 the chain is on the lumenal side; sequence DNIDSNLFSILLTNILYVSE. Residues 224-244 form a helical membrane-spanning segment; that stretch reads AGTVHFRILKGIILALTTIIS. Residues 245–253 lie on the Cytoplasmic side of the membrane; it reads INYVLKKVM. Residues 254-274 form a helical membrane-spanning segment; it reads HFKPFMLSISFAIGLPLFANT. The Lumenal portion of the chain corresponds to 275 to 294; the sequence is FIHLEDGENPLLWLVKYILE. A helical membrane pass occupies residues 295 to 315; it reads STIRQKILFAWSSILILSIPS. Over 316–326 the chain is Cytoplasmic; sequence ILIEKDSLSLN. The chain crosses the membrane as a helical span at residues 327 to 347; the sequence is TSRKLWHFIIFLLIIPSFQMD. The Lumenal segment spans residues 348 to 349; sequence SN. The helical transmembrane segment at 350 to 370 threads the bilayer; the sequence is FVKIALSGTIPVFLSIEYIRF. Residues 371–394 are Cytoplasmic-facing; the sequence is QNLPPLGSAIELQLRRFADDRDHS. The chain crosses the membrane as a helical span at residues 395–415; the sequence is GPLIISYLYLLFGISTPLLMN. Residues 416–417 lie on the Lumenal side of the membrane; that stretch reads NS. The chain crosses the membrane as a helical span at residues 418–438; sequence PMGLIGLGIGDSLASIIGKRY. Residues 439–449 are Cytoplasmic-facing; sequence GRIRWKGTQKT. The chain crosses the membrane as a helical span at residues 450–470; sequence LEGTLAFIVTSFIVCLVLLRF. At 471–472 the chain is on the lumenal side; it reads DK. The helical transmembrane segment at 473 to 493 threads the bilayer; sequence AAIFNHLTTLQLLTLCTLSGV. The Cytoplasmic segment spans residues 494 to 519; the sequence is LEGNSVLNDNILIPAFMMICEKLITL.

This sequence belongs to the polyprenol kinase family.

The protein localises to the endoplasmic reticulum membrane. The catalysed reaction is a di-trans,poly-cis-dolichol + CTP = a di-trans,poly-cis-dolichyl phosphate + CDP + H(+). It participates in protein modification; protein glycosylation. Functionally, catalyzes CTP-mediated phosphorylation of dolichol, the terminal step in de novo dolichyl monophosphate (Dol-P) biosynthesis. Dol-P is a lipid carrier essential for the synthesis of N-linked and O-linked oligosaccharides and for GPI anchors. The sequence is that of Dolichol kinase (SEC59) from Saccharomyces cerevisiae (strain ATCC 204508 / S288c) (Baker's yeast).